The chain runs to 311 residues: Mitochondrial FAD carrier protein FLX1 (311 aa).

3 Solcar repeats span residues 7–101 (TPLQ…TKEL), 123–210 (MNSL…LKQR), and 224–310 (LTNL…LKHR). 6 helical membrane passes run 13-33 (VISGLSAGSVTTLVVHPLDLL), 77-97 (LSINLFGNAIAWGVYFGLYGV), 129-149 (LSAGASSGLMTAILTNPIWVI), 183-203 (LWKGLVPALFGVSQGALYFAV), 230-250 (IEITSLGKMVSVTLVYPFQLL), and 266-286 (LFPLIKLIIANDGFVGLYKGL).

It belongs to the mitochondrial carrier (TC 2.A.29) family.

Its subcellular location is the mitochondrion inner membrane. In terms of biological role, transport of FAD from the cytosol to the mitochondrial matrix. The polypeptide is Mitochondrial FAD carrier protein FLX1 (FLX1) (Saccharomyces cerevisiae (strain ATCC 204508 / S288c) (Baker's yeast)).